The following is a 135-amino-acid chain: uncharacterized protein (135 aa).

The 116-residue stretch at 8-123 (PKGIIVLKTL…IFIYVAINKT (116 aa)) folds into the HotDog ACOT-type domain.

Belongs to the acyl coenzyme A hydrolase family.

This is an uncharacterized protein from Buchnera aphidicola subsp. Acyrthosiphon pisum (strain APS) (Acyrthosiphon pisum symbiotic bacterium).